The chain runs to 147 residues: Sec-independent protein translocase protein TatB (147 aa).

Residues 2–22 (FSSIGWPEIFTVLILGLIIIG) form a helical membrane-spanning segment. The segment at 96 to 147 (FDPKKIMASGTEGEAYRERGINPQPAGDSASPQTPSNKESQPKAGFSWDDIT) is disordered. Polar residues predominate over residues 125–134 (ASPQTPSNKE).

Belongs to the TatB family. The Tat system comprises two distinct complexes: a TatABC complex, containing multiple copies of TatA, TatB and TatC subunits, and a separate TatA complex, containing only TatA subunits. Substrates initially bind to the TatABC complex, which probably triggers association of the separate TatA complex to form the active translocon.

Its subcellular location is the cell membrane. Functionally, part of the twin-arginine translocation (Tat) system that transports large folded proteins containing a characteristic twin-arginine motif in their signal peptide across membranes. Together with TatC, TatB is part of a receptor directly interacting with Tat signal peptides. TatB may form an oligomeric binding site that transiently accommodates folded Tat precursor proteins before their translocation. This is Sec-independent protein translocase protein TatB from Corynebacterium diphtheriae (strain ATCC 700971 / NCTC 13129 / Biotype gravis).